Reading from the N-terminus, the 415-residue chain is Isocitrate dehydrogenase [NADP] (415 aa).

Residues 77–79 (TIT) and Arg-84 each bind NADP(+). Position 79 (Thr-79) interacts with substrate. Substrate-binding positions include 96 to 102 (SPNGTIR), Arg-111, and Arg-134. Asp-254 contacts Mn(2+). Lys-262 contributes to the NADP(+) binding site. Asp-277 provides a ligand contact to Mn(2+). Residues 312–317 (GTVTRH) and Asn-330 each bind NADP(+).

The protein belongs to the isocitrate and isopropylmalate dehydrogenases family. In terms of assembly, heterodimer. The cofactor is Mg(2+). It depends on Mn(2+) as a cofactor.

The protein localises to the cytoplasm. The catalysed reaction is D-threo-isocitrate + NADP(+) = 2-oxoglutarate + CO2 + NADPH. In terms of biological role, may supply 2-oxoglutarate for amino acid biosynthesis and ammonia assimilation via the glutamine synthetase/glutamate synthase (GS/GOGAT) pathway. The sequence is that of Isocitrate dehydrogenase [NADP] from Nicotiana tabacum (Common tobacco).